Consider the following 590-residue polypeptide: Negative elongation factor D (590 aa).

Residues 15 to 43 (YGSAAEWGDEADGGQQEDDSGEGEDDAEV) are disordered. The segment covering 21-43 (WGDEADGGQQEDDSGEGEDDAEV) has biased composition (acidic residues).

The protein belongs to the NELF-D family. As to quaternary structure, the NELF complex is composed of NELFA, NELFB, NELFCD and NELFE; NELFA and NELFCD form a stable subcomplex that binds primarily through NELFCD to the N-terminus of NELFB. Binds RNA which may help to stabilize the NELF complex on nucleic acid. In vitro, the NELFA:NELFCD subcomplex binds to ssDNA and ssRNA in a sequence- and structure-dependent manner. Interacts with ARAF1. Interacts with PCF11. Interacts with NELFB. Interacts with KAT8.

It is found in the nucleus. Essential component of the NELF complex, a complex that negatively regulates the elongation of transcription by RNA polymerase II. The NELF complex, which acts via an association with the DSIF complex and causes transcriptional pausing, is counteracted by the P-TEFb kinase complex. The polypeptide is Negative elongation factor D (NELFCD) (Pongo abelii (Sumatran orangutan)).